A 150-amino-acid chain; its full sequence is 3-dehydroquinate dehydratase (150 aa).

Tyr-25 serves as the catalytic Proton acceptor. Substrate is bound by residues Asn-76, His-82, and Asp-89. His-102 acts as the Proton donor in catalysis. Substrate is bound by residues Leu-103–Ser-104 and Arg-113.

It belongs to the type-II 3-dehydroquinase family. As to quaternary structure, homododecamer.

The catalysed reaction is 3-dehydroquinate = 3-dehydroshikimate + H2O. It functions in the pathway metabolic intermediate biosynthesis; chorismate biosynthesis; chorismate from D-erythrose 4-phosphate and phosphoenolpyruvate: step 3/7. Functionally, catalyzes a trans-dehydration via an enolate intermediate. The sequence is that of 3-dehydroquinate dehydratase from Trichodesmium erythraeum (strain IMS101).